The chain runs to 597 residues: Sulfite reductase [NADPH] flavoprotein alpha-component (597 aa).

The 139-residue stretch at 62–200 (VTVLSASQTG…TADKWIQDVV (139 aa)) folds into the Flavodoxin-like domain. FMN-binding positions include 68–73 (SQTGNA), 115–118 (STQG), and 151–160 (LGDTSYPNFC). Positions 232-446 (ENPYTAKLIT…VEPNDNFRLP (215 aa)) constitute an FAD-binding FR-type domain. FAD-binding positions include Thr320, Asn354, 384–387 (RLYS), 402–404 (SVG), and 417–420 (GVAS). NADP(+) is bound by residues 517 to 518 (SR), 523 to 527 (KIYVQ), and Asp559. FAD is bound at residue Tyr597.

Belongs to the NADPH-dependent sulphite reductase flavoprotein subunit CysJ family. It in the N-terminal section; belongs to the flavodoxin family. This sequence in the C-terminal section; belongs to the flavoprotein pyridine nucleotide cytochrome reductase family. Alpha(8)-beta(8). The alpha component is a flavoprotein, the beta component is a hemoprotein. FAD is required as a cofactor. It depends on FMN as a cofactor.

It catalyses the reaction hydrogen sulfide + 3 NADP(+) + 3 H2O = sulfite + 3 NADPH + 4 H(+). It participates in sulfur metabolism; hydrogen sulfide biosynthesis; hydrogen sulfide from sulfite (NADPH route): step 1/1. Component of the sulfite reductase complex that catalyzes the 6-electron reduction of sulfite to sulfide. This is one of several activities required for the biosynthesis of L-cysteine from sulfate. The flavoprotein component catalyzes the electron flow from NADPH -&gt; FAD -&gt; FMN to the hemoprotein component. The polypeptide is Sulfite reductase [NADPH] flavoprotein alpha-component (Mannheimia succiniciproducens (strain KCTC 0769BP / MBEL55E)).